The primary structure comprises 162 residues: ATP synthase subunit b (162 aa).

Residues Gly16–Leu36 traverse the membrane as a helical segment.

This sequence belongs to the ATPase B chain family. F-type ATPases have 2 components, F(1) - the catalytic core - and F(0) - the membrane proton channel. F(1) has five subunits: alpha(3), beta(3), gamma(1), delta(1), epsilon(1). F(0) has three main subunits: a(1), b(2) and c(10-14). The alpha and beta chains form an alternating ring which encloses part of the gamma chain. F(1) is attached to F(0) by a central stalk formed by the gamma and epsilon chains, while a peripheral stalk is formed by the delta and b chains.

It localises to the cell membrane. Its function is as follows. F(1)F(0) ATP synthase produces ATP from ADP in the presence of a proton or sodium gradient. F-type ATPases consist of two structural domains, F(1) containing the extramembraneous catalytic core and F(0) containing the membrane proton channel, linked together by a central stalk and a peripheral stalk. During catalysis, ATP synthesis in the catalytic domain of F(1) is coupled via a rotary mechanism of the central stalk subunits to proton translocation. In terms of biological role, component of the F(0) channel, it forms part of the peripheral stalk, linking F(1) to F(0). This chain is ATP synthase subunit b, found in Bacillus caldotenax.